The following is a 345-amino-acid chain: Glycerol-3-phosphate dehydrogenase [NAD(P)+] (345 aa).

NADPH is bound by residues serine 11, tryptophan 12, histidine 32, arginine 33, and lysine 106. 3 residues coordinate sn-glycerol 3-phosphate: lysine 106, glycine 137, and serine 139. Alanine 141 contacts NADPH. Residues lysine 192, aspartate 245, serine 255, arginine 256, and asparagine 257 each coordinate sn-glycerol 3-phosphate. The active-site Proton acceptor is the lysine 192. NADPH is bound at residue arginine 256. Residues valine 280 and glutamate 282 each coordinate NADPH.

It belongs to the NAD-dependent glycerol-3-phosphate dehydrogenase family.

It localises to the cytoplasm. It carries out the reaction sn-glycerol 3-phosphate + NAD(+) = dihydroxyacetone phosphate + NADH + H(+). The enzyme catalyses sn-glycerol 3-phosphate + NADP(+) = dihydroxyacetone phosphate + NADPH + H(+). It participates in membrane lipid metabolism; glycerophospholipid metabolism. Its function is as follows. Catalyzes the reduction of the glycolytic intermediate dihydroxyacetone phosphate (DHAP) to sn-glycerol 3-phosphate (G3P), the key precursor for phospholipid synthesis. This chain is Glycerol-3-phosphate dehydrogenase [NAD(P)+], found in Bacillus velezensis (strain DSM 23117 / BGSC 10A6 / LMG 26770 / FZB42) (Bacillus amyloliquefaciens subsp. plantarum).